A 210-amino-acid chain; its full sequence is Regulator of G-protein signaling 17 (210 aa).

Positions 1 to 21 (MRKRQQSQNEGTQAVSQAPGN) are disordered. The RGS domain maps to 84–200 (NFDKMMKTPA…LNSQIYKAFV (117 aa)). Tyr-137 carries the phosphotyrosine modification.

Interacts with GNAI1 and GNAQ. Interacts with GNAZ and GNAI2. Interacts with OPRM1. Forms a complex with mu-opioid receptors and G(alpha)z/i2 subunits, including GNAZ and GNAI2; the formation of this complex results in mu-opioid receptor desensitization. Interacts with HINT1. In terms of processing, N- and O-glycosylated in synapsomal membranes. Post-translationally, serine phosphorylated in synapsomal membranes. Sumoylated with SUMO1 and SUM02 in synaptosomes. The sumoylated forms act as a scaffold for sequestering mu-opioid receptor-activated G(alpha) subunits. Desumoylated by HINT1. In terms of tissue distribution, detected in brain (at protein level). Highly expressed in the hypothalamus, periaqueductal gray matter, and pons-medulla. Lower levels in the thalamus, cortex and spinal cord. Weak expression in the striatum and cerebellum.

Its subcellular location is the membrane. It localises to the synapse. It is found in the synaptosome. The protein localises to the nucleus. The protein resides in the cytoplasm. Its function is as follows. Regulates G protein-coupled receptor signaling cascades, including signaling via muscarinic acetylcholine receptor CHRM2 and dopamine receptor DRD2. Inhibits signal transduction by increasing the GTPase activity of G protein alpha subunits, thereby driving them into their inactive GDP-bound form. Binds selectively to GNAZ and GNAI2 subunits, accelerates their GTPase activity and regulates their signaling activities. Negatively regulates mu-opioid receptor-mediated activation of the G-proteins. This is Regulator of G-protein signaling 17 (Rgs17) from Mus musculus (Mouse).